The primary structure comprises 766 residues: Dipeptidyl peptidase 4 (766 aa).

Residues 1–6 (MKTPWK) lie on the Cytoplasmic side of the membrane. Residues 7–27 (VLLGLLGIAALVTVITVPVVL) form a helical; Signal-anchor for type II membrane protein membrane-spanning segment. Topologically, residues 28-766 (LNKGTDDAAA…HFLKQCFSLP (739 aa)) are extracellular. 8 N-linked (GlcNAc...) asparagine glycosylation sites follow: Asn85, Asn92, Asn150, Asn179, Asn219, Asn229, Asn279, and Asn321. 3 disulfide bridges follow: Cys385/Cys394, Cys444/Cys447, and Cys454/Cys472. Ser630 serves as the catalytic Charge relay system. Cys649 and Cys762 are joined by a disulfide. N-linked (GlcNAc...) asparagine glycosylation occurs at Asn685. Catalysis depends on charge relay system residues Asp708 and His740.

It belongs to the peptidase S9B family. DPPIV subfamily. Monomer. Homodimer. Heterodimer with Seprase (FAP). Requires homodimerization for optimal dipeptidyl peptidase activity and T-cell costimulation. Found in a membrane raft complex, at least composed of BCL10, CARD11, DPP4 and IKBKB. Associates with collagen. Interacts with PTPRC; the interaction is enhanced in an interleukin-12-dependent manner in activated lymphocytes. Interacts (via extracellular domain) with ADA; does not inhibit its dipeptidyl peptidase activity. Interacts with CAV1 (via the N-terminus); the interaction is direct. Interacts (via cytoplasmic tail) with CARD11 (via PDZ domain); its homodimerization is necessary for interaction with CARD11. Interacts with IGF2R; the interaction is direct. Interacts with GPC3. In terms of processing, the soluble form (Dipeptidyl peptidase 4 soluble form also named SDPP) derives from the membrane form (Dipeptidyl peptidase 4 membrane form also named MDPP) by proteolytic processing. N- and O-Glycosylated. Post-translationally, phosphorylated. Mannose 6-phosphate residues in the carbohydrate moiety are necessary for interaction with IGF2R in activated T-cells. Mannose 6-phosphorylation is induced during T-cell activation.

It localises to the secreted. The protein localises to the cell membrane. It is found in the apical cell membrane. Its subcellular location is the cell projection. The protein resides in the invadopodium membrane. It localises to the lamellipodium membrane. The protein localises to the cell junction. It is found in the membrane raft. The catalysed reaction is Release of an N-terminal dipeptide, Xaa-Yaa-|-Zaa-, from a polypeptide, preferentially when Yaa is Pro, provided Zaa is neither Pro nor hydroxyproline.. With respect to regulation, inhibited by GPC3 and diprotin A. Cell surface glycoprotein receptor involved in the costimulatory signal essential for T-cell receptor (TCR)-mediated T-cell activation. Acts as a positive regulator of T-cell coactivation, by binding at least ADA, CAV1, IGF2R, and PTPRC. Its binding to CAV1 and CARD11 induces T-cell proliferation and NF-kappa-B activation in a T-cell receptor/CD3-dependent manner. Its interaction with ADA also regulates lymphocyte-epithelial cell adhesion. In association with FAP is involved in the pericellular proteolysis of the extracellular matrix (ECM), the migration and invasion of endothelial cells into the ECM. May be involved in the promotion of lymphatic endothelial cells adhesion, migration and tube formation. When overexpressed, enhanced cell proliferation, a process inhibited by GPC3. Also acts as a serine exopeptidase with a dipeptidyl peptidase activity that regulates various physiological processes by cleaving peptides in the circulation, including many chemokines, mitogenic growth factors, neuropeptides and peptide hormones such as brain natriuretic peptide 32. Removes N-terminal dipeptides sequentially from polypeptides having unsubstituted N-termini provided that the penultimate residue is proline. The chain is Dipeptidyl peptidase 4 (DPP4) from Sus scrofa (Pig).